A 220-amino-acid chain; its full sequence is UPF0643 protein PB2B2.08 (220 aa).

Belongs to the UPF0643 family.

The protein resides in the cytoplasm. The protein localises to the nucleus. The chain is UPF0643 protein PB2B2.08 from Schizosaccharomyces pombe (strain 972 / ATCC 24843) (Fission yeast).